A 180-amino-acid polypeptide reads, in one-letter code: Large ribosomal subunit protein uL5 (180 aa).

It belongs to the universal ribosomal protein uL5 family. Part of the 50S ribosomal subunit; part of the 5S rRNA/L5/L18/L25 subcomplex. Contacts the 5S rRNA and the P site tRNA. Forms a bridge to the 30S subunit in the 70S ribosome.

This is one of the proteins that bind and probably mediate the attachment of the 5S RNA into the large ribosomal subunit, where it forms part of the central protuberance. In the 70S ribosome it contacts protein S13 of the 30S subunit (bridge B1b), connecting the 2 subunits; this bridge is implicated in subunit movement. Contacts the P site tRNA; the 5S rRNA and some of its associated proteins might help stabilize positioning of ribosome-bound tRNAs. The sequence is that of Large ribosomal subunit protein uL5 from Chlamydia pneumoniae (Chlamydophila pneumoniae).